The sequence spans 490 residues: Auxin transporter-like protein 5 (490 aa).

At 1–55 the chain is on the cytoplasmic side; it reads MEMANDKVAETVIVGNYVEMESEGKPPQDIKSKLSNFLWHGGSAYDAWFSCASNQ. The helical transmembrane segment at 56-73 threads the bilayer; it reads VAQVLLTLPYSFSQLGML. The Extracellular portion of the chain corresponds to 74-75; that stretch reads SG. The helical transmembrane segment at 76–96 threads the bilayer; sequence ILFQLFYGILGSWTAYLISIL. The Cytoplasmic portion of the chain corresponds to 97-132; the sequence is YVEYRTRKEREKVNFRSHVIQWFEVLDGLLGKHWRN. Residues 133 to 153 traverse the membrane as a helical segment; it reads VGLGFNCTFLLFGSVIQLIAC. Residues 154–168 are Extracellular-facing; it reads ASNIYYINDNLDKRT. Residues 169–189 traverse the membrane as a helical segment; it reads WTYIFGACCATTVFIPSFHNY. A topological domain (cytoplasmic) is located at residue Arg190. A helical membrane pass occupies residues 191–211; the sequence is IWSFLGLVMTTYTAWYLTIAA. The Extracellular portion of the chain corresponds to 212–227; the sequence is VLHGQVEGVKHSGPNK. Residues 228–248 traverse the membrane as a helical segment; sequence IILYFTGATNILYTFGGHAVT. Residues 249-262 are Cytoplasmic-facing; that stretch reads VEIMHAMWKPQKFK. A helical membrane pass occupies residues 263 to 283; that stretch reads AIYLLATLYVLTLTIPSATAV. At 284–310 the chain is on the extracellular side; that stretch reads YWAFGDMLLNHSNAFALLPKSPFRDMA. An N-linked (GlcNAc...) asparagine glycan is attached at Asn293. A helical transmembrane segment spans residues 311–331; that stretch reads VILMLIHQFITFGFACTPLYF. Residues 332 to 352 are Cytoplasmic-facing; the sequence is VWEKTVGMHECKSLCKRALVR. The helical transmembrane segment at 353-373 threads the bilayer; sequence LPVVIPIWFLAIIFPFFGPIN. The Extracellular portion of the chain corresponds to 374 to 376; that stretch reads STV. The helical transmembrane segment at 377–397 threads the bilayer; sequence GSLLVSFTVYIIPALAHIFTF. Residues 398–420 lie on the Cytoplasmic side of the membrane; sequence KSSSARQNAVEQPPKFVGRWVGT. The chain crosses the membrane as a helical span at residues 421 to 441; the sequence is FVINVFIVVWVLIVGFGFGGW. Over 442 to 490 the chain is Extracellular; sequence ASMVNFVHQIDTFGLFTKCYQCPPPTPSVPTMPPHQMNATAPSPHHHHH. Asn479 carries an N-linked (GlcNAc...) asparagine glycan.

Belongs to the amino acid/polyamine transporter 2 family. Amino acid/auxin permease (AAAP) (TC 2.A.18.1) subfamily. As to expression, shoots and roots of nodulating plants, at low levels.

Its subcellular location is the cell membrane. Its function is as follows. Carrier protein involved in proton-driven auxin influx. Mediates the formation of auxin gradient from developing leaves (site of auxin biosynthesis) to tips by contributing to the loading of auxin in vascular tissues and facilitating acropetal (base to tip) auxin transport within inner tissues of the root apex, and basipetal (tip to base) auxin transport within outer tissues of the root apex. May be involved in lateral roots and nodules formation. The chain is Auxin transporter-like protein 5 (LAX5) from Medicago truncatula (Barrel medic).